The sequence spans 159 residues: Large ribosomal subunit protein uL10 (159 aa).

It belongs to the universal ribosomal protein uL10 family. As to quaternary structure, part of the ribosomal stalk of the 50S ribosomal subunit. The N-terminus interacts with L11 and the large rRNA to form the base of the stalk. The C-terminus forms an elongated spine to which L12 dimers bind in a sequential fashion forming a multimeric L10(L12)X complex.

Its function is as follows. Forms part of the ribosomal stalk, playing a central role in the interaction of the ribosome with GTP-bound translation factors. The polypeptide is Large ribosomal subunit protein uL10 (Sulfurimonas denitrificans (strain ATCC 33889 / DSM 1251) (Thiomicrospira denitrificans (strain ATCC 33889 / DSM 1251))).